A 393-amino-acid polypeptide reads, in one-letter code: Staphopain B (393 aa).

The signal sequence occupies residues 1–36; the sequence is MNSSCKTRVFNIISIIMVSMLILSLGAFANNNKAKA. Residues 37 to 219 constitute a propeptide that is removed on maturation; sequence DSHSKQLEIN…KVEENEAIQE (183 aa). Residues Cys243, His340, and Asn360 contribute to the active site.

Belongs to the peptidase C47 family. In the cytoplasm, prematurely activated/folded SspB forms a stable non-covalent complex with SspC. In terms of processing, proteolytically cleaved by staphylococcal serine protease (SspA).

It localises to the secreted. Prematurely activated/folded staphopain B is inhibited by staphostatin B (SspC), which is probably required to protect staphylococcal cytoplasmic proteins from degradation by SspB. In terms of biological role, cysteine protease that plays an important role in the inhibition of host innate immune response. Degrades host elastin, fibrogen, fibronectin and kininogen. Blocks phagocytosis of opsonised S.aureus by neutrophils and monocytes by inducing their death in a proteolytic activity-dependent manner. Decreases surface expression of the 'don't eat me' signal CD31 on neutrophils. Cleaves host galectin-3/LGALS3, thereby inhibiting the neutrophil-activating ability of the lectin. The chain is Staphopain B (sspB) from Staphylococcus aureus.